A 457-amino-acid chain; its full sequence is Argininosuccinate lyase (457 aa).

The protein belongs to the lyase 1 family. Argininosuccinate lyase subfamily.

It is found in the cytoplasm. It carries out the reaction 2-(N(omega)-L-arginino)succinate = fumarate + L-arginine. The protein operates within amino-acid biosynthesis; L-arginine biosynthesis; L-arginine from L-ornithine and carbamoyl phosphate: step 3/3. This Escherichia coli O9:H4 (strain HS) protein is Argininosuccinate lyase.